The primary structure comprises 502 residues: Putative diacyglycerol O-acyltransferase MT1809 (502 aa).

Residue histidine 174 is the Proton acceptor of the active site.

This sequence belongs to the long-chain O-acyltransferase family.

The catalysed reaction is an acyl-CoA + a 1,2-diacyl-sn-glycerol = a triacyl-sn-glycerol + CoA. The protein operates within glycerolipid metabolism; triacylglycerol biosynthesis. The protein is Putative diacyglycerol O-acyltransferase MT1809 of Mycobacterium tuberculosis (strain CDC 1551 / Oshkosh).